The primary structure comprises 305 residues: UDP-3-O-acyl-N-acetylglucosamine deacetylase (305 aa).

Zn(2+) is bound by residues histidine 79, histidine 238, and aspartate 242. Histidine 265 serves as the catalytic Proton donor.

This sequence belongs to the LpxC family. The cofactor is Zn(2+).

It catalyses the reaction a UDP-3-O-[(3R)-3-hydroxyacyl]-N-acetyl-alpha-D-glucosamine + H2O = a UDP-3-O-[(3R)-3-hydroxyacyl]-alpha-D-glucosamine + acetate. It functions in the pathway glycolipid biosynthesis; lipid IV(A) biosynthesis; lipid IV(A) from (3R)-3-hydroxytetradecanoyl-[acyl-carrier-protein] and UDP-N-acetyl-alpha-D-glucosamine: step 2/6. Functionally, catalyzes the hydrolysis of UDP-3-O-myristoyl-N-acetylglucosamine to form UDP-3-O-myristoylglucosamine and acetate, the committed step in lipid A biosynthesis. This Aliivibrio fischeri (strain ATCC 700601 / ES114) (Vibrio fischeri) protein is UDP-3-O-acyl-N-acetylglucosamine deacetylase.